The sequence spans 117 residues: Large ribosomal subunit protein bL20 (117 aa).

This sequence belongs to the bacterial ribosomal protein bL20 family.

Binds directly to 23S ribosomal RNA and is necessary for the in vitro assembly process of the 50S ribosomal subunit. It is not involved in the protein synthesizing functions of that subunit. This is Large ribosomal subunit protein bL20 from Natranaerobius thermophilus (strain ATCC BAA-1301 / DSM 18059 / JW/NM-WN-LF).